The primary structure comprises 163 residues: Zinc finger A20 and AN1 domain-containing stress-associated protein 3 (163 aa).

Residues 7 to 41 form an A20-type zinc finger; the sequence is LQEPRLCANNCGFFGSTATQNLCSKCFRDLQHQEQ. Cysteine 13, cysteine 17, cysteine 29, and cysteine 32 together coordinate Zn(2+). The disordered stretch occupies residues 57–101; that stretch reads VGAAASSSVSPPPPPPADSKEIVEAKSEKRAAAEPEEADGPPQDP. The span at 74-89 shows a compositional bias: basic and acidic residues; the sequence is DSKEIVEAKSEKRAAA. Residues 98–144 form an AN1-type zinc finger; the sequence is PQDPKRCLTCRRRVGITGFRCRCGFVFCGTHRYAEQHECSFDFKRMG. Zn(2+)-binding residues include cysteine 104, cysteine 107, cysteine 118, cysteine 120, cysteine 125, histidine 128, histidine 134, and cysteine 136.

Its function is as follows. May be involved in environmental stress response. The polypeptide is Zinc finger A20 and AN1 domain-containing stress-associated protein 3 (SAP3) (Arabidopsis thaliana (Mouse-ear cress)).